Here is a 435-residue protein sequence, read N- to C-terminus: Temperature-sensitive sn-2 acyl-lipid omega-3 desaturase (ferredoxin), chloroplastic (435 aa).

The N-terminal 42 residues, M1–P42, are a transit peptide targeting the chloroplast. 2 helical membrane passes run M111 to F131 and W134 to L154. Positions H156 to H160 match the Histidine box-1 motif. A Histidine box-2 motif is present at residues H192–H196. 2 consecutive transmembrane segments (helical) span residues V268 to G290 and L297 to G319. Positions H359–H363 match the Histidine box-3 motif.

It belongs to the fatty acid desaturase type 1 family.

It is found in the plastid. Its subcellular location is the chloroplast membrane. It catalyses the reaction a (7Z,10Z)-hexadecadienoyl-containing glycerolipid + 2 reduced [2Fe-2S]-[ferredoxin] + O2 + 2 H(+) = a (7Z,10Z,13Z)-hexadecatrienoyl-containing glycerolipid + 2 oxidized [2Fe-2S]-[ferredoxin] + 2 H2O. The catalysed reaction is a (9Z,12Z)-octadecadienoyl-containing glycerolipid + 2 reduced [2Fe-2S]-[ferredoxin] + O2 + 2 H(+) = (9Z,12Z,15Z)-octadecatrienoyl-containing glycerolipid + 2 oxidized [2Fe-2S]-[ferredoxin] + 2 H2O. Its pathway is lipid metabolism; polyunsaturated fatty acid biosynthesis. Its function is as follows. Chloroplast omega-3 fatty acid desaturase introduces the third double bond in the biosynthesis of 16:3 and 18:3 fatty acids, important constituents of plant membranes. It is thought to use ferredoxin as an electron donor and to act on fatty acids esterified to galactolipids, sulfolipids and phosphatidylglycerol. The chain is Temperature-sensitive sn-2 acyl-lipid omega-3 desaturase (ferredoxin), chloroplastic from Arabidopsis thaliana (Mouse-ear cress).